Here is a 449-residue protein sequence, read N- to C-terminus: Adenylosuccinate lyase (449 aa).

N(6)-(1,2-dicarboxyethyl)-AMP contacts are provided by residues 9–10 (RY), 75–77 (KHD), and 102–103 (TS). Residue His150 is the Proton donor/acceptor of the active site. Residue Gln224 participates in N(6)-(1,2-dicarboxyethyl)-AMP binding. Ser275 (proton donor/acceptor) is an active-site residue. N(6)-(1,2-dicarboxyethyl)-AMP contacts are provided by residues Ser276, 281 to 283 (KMN), and 320 to 324 (SSERI).

This sequence belongs to the lyase 1 family. Adenylosuccinate lyase subfamily. As to quaternary structure, homotetramer. Residues from neighboring subunits contribute catalytic and substrate-binding residues to each active site.

It catalyses the reaction N(6)-(1,2-dicarboxyethyl)-AMP = fumarate + AMP. The enzyme catalyses (2S)-2-[5-amino-1-(5-phospho-beta-D-ribosyl)imidazole-4-carboxamido]succinate = 5-amino-1-(5-phospho-beta-D-ribosyl)imidazole-4-carboxamide + fumarate. Its pathway is purine metabolism; AMP biosynthesis via de novo pathway; AMP from IMP: step 2/2. It functions in the pathway purine metabolism; IMP biosynthesis via de novo pathway; 5-amino-1-(5-phospho-D-ribosyl)imidazole-4-carboxamide from 5-amino-1-(5-phospho-D-ribosyl)imidazole-4-carboxylate: step 2/2. Functionally, catalyzes two reactions in de novo purine nucleotide biosynthesis. Catalyzes the breakdown of 5-aminoimidazole- (N-succinylocarboxamide) ribotide (SAICAR or 2-[5-amino-1-(5-phospho-beta-D-ribosyl)imidazole-4-carboxamido]succinate) to 5-aminoimidazole-4-carboxamide ribotide (AICAR or 5-amino-1-(5-phospho-beta-D-ribosyl)imidazole-4-carboxamide) and fumarate, and of adenylosuccinate (ADS or N(6)-(1,2-dicarboxyethyl)-AMP) to adenosine monophosphate (AMP) and fumarate. The polypeptide is Adenylosuccinate lyase (purB) (Methanothermobacter thermautotrophicus (strain ATCC 29096 / DSM 1053 / JCM 10044 / NBRC 100330 / Delta H) (Methanobacterium thermoautotrophicum)).